A 465-amino-acid chain; its full sequence is Casein kinase 1-like protein 2 (465 aa).

The Protein kinase domain occupies 9-277; that stretch reads FRLGRKIGGG…LKRLFRDLFI (269 aa). Residues 15 to 23 and Lys-38 contribute to the ATP site; that span reads IGGGSFGEI. The active-site Proton acceptor is Asp-128. 2 disordered regions span residues 300 to 344 and 396 to 428; these read STPP…GIPR and REAA…VSRN. The segment covering 405-428 has biased composition (polar residues); that stretch reads SEPSNPQIVEAGSGSNSKIPVSRN.

It belongs to the protein kinase superfamily. CK1 Ser/Thr protein kinase family. Casein kinase I subfamily. In terms of assembly, monomer. In terms of processing, autophosphorylated.

The protein resides in the cytoplasm. It localises to the nucleus. The catalysed reaction is L-seryl-[protein] + ATP = O-phospho-L-seryl-[protein] + ADP + H(+). The enzyme catalyses L-threonyl-[protein] + ATP = O-phospho-L-threonyl-[protein] + ADP + H(+). In terms of biological role, casein kinases are operationally defined by their preferential utilization of acidic proteins such as caseins as substrates. It can phosphorylate a large number of proteins. This Arabidopsis thaliana (Mouse-ear cress) protein is Casein kinase 1-like protein 2.